The primary structure comprises 1373 residues: DNA-directed RNA polymerase subunit beta (1373 aa).

It belongs to the RNA polymerase beta chain family. In terms of assembly, the RNAP catalytic core consists of 2 alpha, 1 beta, 1 beta' and 1 omega subunit. When a sigma factor is associated with the core the holoenzyme is formed, which can initiate transcription.

It carries out the reaction RNA(n) + a ribonucleoside 5'-triphosphate = RNA(n+1) + diphosphate. In terms of biological role, DNA-dependent RNA polymerase catalyzes the transcription of DNA into RNA using the four ribonucleoside triphosphates as substrates. This Rickettsia canadensis (strain McKiel) protein is DNA-directed RNA polymerase subunit beta.